A 46-amino-acid polypeptide reads, in one-letter code: Escargot/snail protein homolog (46 aa).

C2H2-type zinc fingers lie at residues 1-4, 9-30, and 36-46; these read HIAH, CKCP…IRTH, and SVCQHCNRAFA.

Belongs to the snail C2H2-type zinc-finger protein family.

Its subcellular location is the nucleus. The chain is Escargot/snail protein homolog from Lithobius forficatus (Centipede).